The chain runs to 785 residues: Cation/H(+) antiporter 1 (785 aa).

The next 12 membrane-spanning stretches (helical) occupy residues leucine 19–phenylalanine 39, glycine 44–isoleucine 64, tyrosine 79–isoleucine 99, isoleucine 112–phenylalanine 132, phenylalanine 143–isoleucine 163, leucine 179–leucine 199, phenylalanine 201–isoleucine 221, tyrosine 240–isoleucine 260, tyrosine 294–valine 314, leucine 323–alanine 343, glutamine 352–leucine 372, and methionine 389–leucine 409.

The protein belongs to the monovalent cation:proton antiporter 2 (CPA2) transporter (TC 2.A.37) family. CHX (TC 2.A.37.4) subfamily. Specifically expressed in pollen.

It localises to the membrane. In terms of biological role, may operate as a cation/H(+) antiporter. The polypeptide is Cation/H(+) antiporter 1 (CHX1) (Arabidopsis thaliana (Mouse-ear cress)).